We begin with the raw amino-acid sequence, 725 residues long: Ribosomal RNA large subunit methyltransferase K/L (725 aa).

The region spanning 45–156 is the THUMP domain; sequence SGYRACLWSR…RGRLSLGIDL (112 aa).

The protein belongs to the methyltransferase superfamily. RlmKL family.

It is found in the cytoplasm. The enzyme catalyses guanosine(2445) in 23S rRNA + S-adenosyl-L-methionine = N(2)-methylguanosine(2445) in 23S rRNA + S-adenosyl-L-homocysteine + H(+). It catalyses the reaction guanosine(2069) in 23S rRNA + S-adenosyl-L-methionine = N(2)-methylguanosine(2069) in 23S rRNA + S-adenosyl-L-homocysteine + H(+). Its function is as follows. Specifically methylates the guanine in position 2445 (m2G2445) and the guanine in position 2069 (m7G2069) of 23S rRNA. This is Ribosomal RNA large subunit methyltransferase K/L from Marinobacter nauticus (strain ATCC 700491 / DSM 11845 / VT8) (Marinobacter aquaeolei).